Consider the following 282-residue polypeptide: F-actin-capping protein subunit beta (282 aa).

The interval serine 73–alanine 103 is disordered. Residues glycine 87–glutamate 101 are compositionally biased toward gly residues.

Belongs to the F-actin-capping protein beta subunit family. In terms of assembly, component of the F-actin capping complex, composed of a heterodimer of an alpha and a beta subunit.

It localises to the cytoplasm. The protein localises to the cytoskeleton. It is found in the actin patch. F-actin-capping proteins bind in a Ca(2+)-independent manner to the fast growing ends of actin filaments (barbed end) thereby blocking the exchange of subunits at these ends. Unlike other capping proteins (such as gelsolin and severin), these proteins do not sever actin filaments. In Gibberella zeae (strain ATCC MYA-4620 / CBS 123657 / FGSC 9075 / NRRL 31084 / PH-1) (Wheat head blight fungus), this protein is F-actin-capping protein subunit beta (CAP2).